Consider the following 251-residue polypeptide: Imidazole glycerol phosphate synthase subunit HisF (251 aa).

Residues aspartate 11 and aspartate 130 contribute to the active site.

It belongs to the HisA/HisF family. In terms of assembly, heterodimer of HisH and HisF.

The protein resides in the cytoplasm. It carries out the reaction 5-[(5-phospho-1-deoxy-D-ribulos-1-ylimino)methylamino]-1-(5-phospho-beta-D-ribosyl)imidazole-4-carboxamide + L-glutamine = D-erythro-1-(imidazol-4-yl)glycerol 3-phosphate + 5-amino-1-(5-phospho-beta-D-ribosyl)imidazole-4-carboxamide + L-glutamate + H(+). It participates in amino-acid biosynthesis; L-histidine biosynthesis; L-histidine from 5-phospho-alpha-D-ribose 1-diphosphate: step 5/9. Its function is as follows. IGPS catalyzes the conversion of PRFAR and glutamine to IGP, AICAR and glutamate. The HisF subunit catalyzes the cyclization activity that produces IGP and AICAR from PRFAR using the ammonia provided by the HisH subunit. The protein is Imidazole glycerol phosphate synthase subunit HisF of Pelodictyon phaeoclathratiforme (strain DSM 5477 / BU-1).